A 328-amino-acid chain; its full sequence is UPF0421 protein SE_1574 (328 aa).

A run of 4 helical transmembrane segments spans residues 26–46 (LFCM…IVTI), 61–81 (LPAT…FGDQ), 109–129 (AVLT…FNFF), and 132–152 (LLTA…ILPP).

Belongs to the UPF0421 family.

It is found in the cell membrane. The sequence is that of UPF0421 protein SE_1574 from Staphylococcus epidermidis (strain ATCC 12228 / FDA PCI 1200).